The chain runs to 409 residues: Argininosuccinate synthase (409 aa).

ATP is bound by residues 10–18 (AYSGGLDTS) and alanine 37. Residues tyrosine 90 and serine 95 each coordinate L-citrulline. Glycine 120 provides a ligand contact to ATP. The L-aspartate site is built by threonine 122, asparagine 126, and aspartate 127. Asparagine 126 serves as a coordination point for L-citrulline. The L-citrulline site is built by arginine 130, serine 182, serine 191, glutamate 267, and tyrosine 279.

Belongs to the argininosuccinate synthase family. Type 1 subfamily. As to quaternary structure, homotetramer.

It localises to the cytoplasm. It catalyses the reaction L-citrulline + L-aspartate + ATP = 2-(N(omega)-L-arginino)succinate + AMP + diphosphate + H(+). The protein operates within amino-acid biosynthesis; L-arginine biosynthesis; L-arginine from L-ornithine and carbamoyl phosphate: step 2/3. The protein is Argininosuccinate synthase of Azoarcus sp. (strain BH72).